A 543-amino-acid chain; its full sequence is Probable protein kinase UbiB (543 aa).

The Protein kinase domain maps to 123–501 (DFDIVPLASA…KRQQAKGQFL (379 aa)). ATP contacts are provided by residues 129 to 137 (LASASIAQV) and Lys-152. The active-site Proton acceptor is the Asp-287. A helical membrane pass occupies residues 517-539 (TSNITALASISAATGVTFWLLSW).

This sequence belongs to the ABC1 family. UbiB subfamily.

It localises to the cell inner membrane. It participates in cofactor biosynthesis; ubiquinone biosynthesis [regulation]. Functionally, is probably a protein kinase regulator of UbiI activity which is involved in aerobic coenzyme Q (ubiquinone) biosynthesis. This Aliivibrio salmonicida (strain LFI1238) (Vibrio salmonicida (strain LFI1238)) protein is Probable protein kinase UbiB.